Reading from the N-terminus, the 549-residue chain is Chaperonin GroEL (549 aa).

ATP is bound by residues 30-33 (TLGP), Lys51, 87-91 (DGTTT), Gly415, and Asp496.

It belongs to the chaperonin (HSP60) family. As to quaternary structure, forms a cylinder of 14 subunits composed of two heptameric rings stacked back-to-back. Interacts with the co-chaperonin GroES.

The protein resides in the cytoplasm. The catalysed reaction is ATP + H2O + a folded polypeptide = ADP + phosphate + an unfolded polypeptide.. Its function is as follows. Together with its co-chaperonin GroES, plays an essential role in assisting protein folding. The GroEL-GroES system forms a nano-cage that allows encapsulation of the non-native substrate proteins and provides a physical environment optimized to promote and accelerate protein folding. This chain is Chaperonin GroEL, found in Acidiphilium cryptum (strain JF-5).